Reading from the N-terminus, the 204-residue chain is Glutathione S-transferase (204 aa).

Residues 3 to 80 (PSYKLTYCPV…YLGKQFGLSG (78 aa)) form the GST N-terminal domain. Glutathione-binding positions include tyrosine 9, tryptophan 40, lysine 44, 50–52 (GKT), and 64–65 (QS). In terms of domain architecture, GST C-terminal spans 82–204 (DDWENLEIDM…WVAKRPPTDL (123 aa)).

Belongs to the GST superfamily. Sigma family.

It carries out the reaction RX + glutathione = an S-substituted glutathione + a halide anion + H(+). The chain is Glutathione S-transferase from Blattella germanica (German cockroach).